Reading from the N-terminus, the 284-residue chain is Lipoyl synthase (284 aa).

[4Fe-4S] cluster is bound by residues Cys-38, Cys-43, Cys-49, Cys-64, Cys-68, Cys-71, and Ser-277. A Radical SAM core domain is found at 50–266; the sequence is WSRGTATFLL…RDEALGMGFS (217 aa).

It belongs to the radical SAM superfamily. Lipoyl synthase family. [4Fe-4S] cluster is required as a cofactor.

The protein resides in the cytoplasm. The catalysed reaction is [[Fe-S] cluster scaffold protein carrying a second [4Fe-4S](2+) cluster] + N(6)-octanoyl-L-lysyl-[protein] + 2 oxidized [2Fe-2S]-[ferredoxin] + 2 S-adenosyl-L-methionine + 4 H(+) = [[Fe-S] cluster scaffold protein] + N(6)-[(R)-dihydrolipoyl]-L-lysyl-[protein] + 4 Fe(3+) + 2 hydrogen sulfide + 2 5'-deoxyadenosine + 2 L-methionine + 2 reduced [2Fe-2S]-[ferredoxin]. The protein operates within protein modification; protein lipoylation via endogenous pathway; protein N(6)-(lipoyl)lysine from octanoyl-[acyl-carrier-protein]: step 2/2. Its function is as follows. Catalyzes the radical-mediated insertion of two sulfur atoms into the C-6 and C-8 positions of the octanoyl moiety bound to the lipoyl domains of lipoate-dependent enzymes, thereby converting the octanoylated domains into lipoylated derivatives. The polypeptide is Lipoyl synthase (Chlorobium phaeovibrioides (strain DSM 265 / 1930) (Prosthecochloris vibrioformis (strain DSM 265))).